Reading from the N-terminus, the 917-residue chain is Interleukin-6 receptor subunit beta (917 aa).

Residues 1 to 22 (MSAPRIWLAQALLFFLTTESIG) form the signal peptide. Residues 23–617 (QLLEPCGYIY…TPKFAQGEIE (595 aa)) are Extracellular-facing. Residues 26 to 120 (EPCGYIYPEF…IEQNVYGVTM (95 aa)) enclose the Ig-like C2-type domain. 2 disulfide bridges follow: Cys28–Cys54 and Cys48–Cys103. Residues Asn43, Asn61, Asn83, and Asn131 are each glycosylated (N-linked (GlcNAc...) asparagine). 5 Fibronectin type-III domains span residues 128–221 (KPTN…VKPT), 222–322 (PPYN…TYED), 327–417 (PPSF…IPSP), 422–515 (AYSV…LKQA), and 517–611 (PARG…TPKF). Cys134 and Cys144 are joined by a disulfide. Asn157 carries an N-linked (GlcNAc...) asparagine glycan. A disulfide bridge links Cys172 with Cys180. An N-linked (GlcNAc...) asparagine glycan is attached at Asn225. Residues 308 to 312 (WSDWS) carry the WSXWS motif motif. Residue Asn388 is glycosylated (N-linked (GlcNAc...) asparagine). Cys456 and Cys464 are joined by a disulfide. N-linked (GlcNAc...) asparagine glycans are attached at residues Asn476 and Asn551. A helical membrane pass occupies residues 618–639 (AIVVPVCLAFLLTTLLGVLFCF). Residues 640–917 (NKRDLIKKHI…TVRQGGYMPQ (278 aa)) are Cytoplasmic-facing. The Box 1 motif motif lies at 649–657 (IWPNVPDPS). 2 disordered regions span residues 658 to 678 (KSHI…NSKD) and 719 to 754 (TEGH…TAST). Ser659 and Ser665 each carry phosphoserine. The segment covering 729-753 (SSCMSSSRPSISSNEENESAQSTAS) has biased composition (low complexity). Residues Ser780, Ser787, Ser827, and Ser837 each carry the phosphoserine modification. Residues 898–917 (EEIPKSYLPQTVRQGGYMPQ) form a disordered region.

This sequence belongs to the type I cytokine receptor family. Type 2 subfamily. In terms of assembly, component of a hexamer of two molecules each of IL6, IL6R and IL6ST; associates with the complex IL6:IL6R but does not interact with IL6. Forms heterodimers composed of LIFR and IL6ST (type I OSM receptor) which are activated by LIF and OSM. Also forms heterodimers composed of OSMR and IL6ST (type II receptor) which are activated by OSM but not by LIF. Interacts with HCK. Interacts with INPP5D/SHIP1. Interacts with SRC and YES. Interacts with ARMH4; this interaction prevents IL6ST protein homodimerization and bridges ARMH4 with IL6R and STAT3 and therefore inhibits phosphorylation of STAT3 at 'Tyr-705'. Post-translationally, phosphorylation of Ser-780 down-regulates cell surface expression. In terms of processing, heavily N-glycosylated. Glycosylation is required for protein stability and localization in plasma membrane but not for ligand binding. Expression not restricted to IL6-responsive cells. Found in tissues such as brain, heart, thymus, spleen, kidney, lung and liver. Found in all the cell lines tested except BaF-B03. Expressed paraventricular nucleus of the hypothalamus.

It is found in the cell membrane. Its function is as follows. Signal-transducing molecule. The receptor systems for IL6, LIF, OSM, CNTF, IL11, CTF1 and BSF3 can utilize IL6ST for initiating signal transmission. Binding of IL6 to IL6R induces IL6ST homodimerization and formation of a high-affinity receptor complex, which activates the intracellular JAK-MAPK and JAK-STAT3 signaling pathways. That causes phosphorylation of IL6ST tyrosine residues which in turn activates STAT3. In parallel, the IL6 signaling pathway induces the expression of two cytokine receptor signaling inhibitors, SOCS1 and SOCS3, which inhibit JAK and terminate the activity of the IL6 signaling pathway as a negative feedback loop. Also activates the yes-associated protein 1 (YAP) and NOTCH pathways to control inflammation-induced epithelial regeneration, independently of STAT3. Mediates signals which regulate immune response, hematopoiesis, pain control and bone metabolism. Has a role in embryonic development. Essential for survival of motor and sensory neurons and for differentiation of astrocytes. Required for expression of TRPA1 in nociceptive neurons. Required for the maintenance of PTH1R expression in the osteoblast lineage and for the stimulation of PTH-induced osteoblast differentiation. Required for normal trabecular bone mass and cortical bone composition. This is Interleukin-6 receptor subunit beta from Mus musculus (Mouse).